A 499-amino-acid chain; its full sequence is Probable cytosol aminopeptidase (499 aa).

Residues K269 and D274 each coordinate Mn(2+). Residue K281 is part of the active site. 3 residues coordinate Mn(2+): D292, D351, and E353. The active site involves R355.

It belongs to the peptidase M17 family. The cofactor is Mn(2+).

It is found in the cytoplasm. It carries out the reaction Release of an N-terminal amino acid, Xaa-|-Yaa-, in which Xaa is preferably Leu, but may be other amino acids including Pro although not Arg or Lys, and Yaa may be Pro. Amino acid amides and methyl esters are also readily hydrolyzed, but rates on arylamides are exceedingly low.. It catalyses the reaction Release of an N-terminal amino acid, preferentially leucine, but not glutamic or aspartic acids.. Its function is as follows. Presumably involved in the processing and regular turnover of intracellular proteins. Catalyzes the removal of unsubstituted N-terminal amino acids from various peptides. This is Probable cytosol aminopeptidase from Actinobacillus pleuropneumoniae serotype 3 (strain JL03).